The following is a 916-amino-acid chain: Beta-scruin (916 aa).

Kelch repeat units lie at residues 82 to 133 (AVLI…YFHG), 134 to 187 (KVYL…IMDE), 188 to 235 (RIFV…NNEG), 237 to 289 (IYVV…TQNK), 291 to 341 (IWIW…KAGT), and 342 to 390 (QVFI…GIPV). Residues 393–426 (SPASDITTSKTTRSGSRKTQKTLKDKQQSDIHAR) are disordered. The segment covering 414-425 (TLKDKQQSDIHA) has biased composition (basic and acidic residues). 6 Kelch repeats span residues 586 to 637 (VIIA…YYRG), 638 to 691 (AIYV…VFND), 692 to 739 (SIYV…SHGG), 741 to 793 (LWVM…VCDD), 795 to 847 (IWLC…ALES), and 849 to 896 (LYLI…TIPP).

As to expression, sperm.

Its function is as follows. May have an enzymatic role. Found the acrosomal vesicle at the anterior of sperm but not in the acrosomal process. The protein is Beta-scruin of Limulus polyphemus (Atlantic horseshoe crab).